A 215-amino-acid polypeptide reads, in one-letter code: Octanoyltransferase (215 aa).

The BPL/LPL catalytic domain occupies 33–209; it reads PDTPDQLWLV…QFARKLGYET (177 aa). Substrate is bound by residues 72–79, 139–141, and 152–154; these read RGGQVTYH, SLG, and GLA. Residue Cys170 is the Acyl-thioester intermediate of the active site.

It belongs to the LipB family.

Its subcellular location is the cytoplasm. It catalyses the reaction octanoyl-[ACP] + L-lysyl-[protein] = N(6)-octanoyl-L-lysyl-[protein] + holo-[ACP] + H(+). It functions in the pathway protein modification; protein lipoylation via endogenous pathway; protein N(6)-(lipoyl)lysine from octanoyl-[acyl-carrier-protein]: step 1/2. In terms of biological role, catalyzes the transfer of endogenously produced octanoic acid from octanoyl-acyl-carrier-protein onto the lipoyl domains of lipoate-dependent enzymes. Lipoyl-ACP can also act as a substrate although octanoyl-ACP is likely to be the physiological substrate. This chain is Octanoyltransferase, found in Cellvibrio japonicus (strain Ueda107) (Pseudomonas fluorescens subsp. cellulosa).